Consider the following 520-residue polypeptide: Maturase K (520 aa).

It belongs to the intron maturase 2 family. MatK subfamily.

The protein resides in the plastid. The protein localises to the chloroplast. In terms of biological role, usually encoded in the trnK tRNA gene intron. Probably assists in splicing its own and other chloroplast group II introns. This is Maturase K from Iris cristata (Dwarf crested iris).